The following is a 198-amino-acid chain: Putative manganese efflux pump MntP (198 aa).

Transmembrane regions (helical) follow at residues Ser-3–Cys-23, Val-37–Leu-57, Ile-65–Ile-85, Ser-105–Leu-127, Ile-131–Gly-153, and Ile-171–Phe-191.

This sequence belongs to the MntP (TC 9.B.29) family.

It is found in the cell membrane. Its function is as follows. Probably functions as a manganese efflux pump. In Acetivibrio thermocellus (strain ATCC 27405 / DSM 1237 / JCM 9322 / NBRC 103400 / NCIMB 10682 / NRRL B-4536 / VPI 7372) (Clostridium thermocellum), this protein is Putative manganese efflux pump MntP.